The sequence spans 232 residues: SLYDIAPVTPGVAVDLSHIPTDVKIKGFSGEDATPALEGADVVLISAGVARKPGMDRSDLFNVNAGIVKNLVQQIAKTCPQACIGVITNPVNTTVAIAAEVLKKAGVYDKNKLFGVTTLDIIRSNTFVAELKGKSATEVEVPVIGGHSGVTILPLLSQIPGVSFSDQEVADLTKRIQNAGTEVVEAKAGGGSATLSMGQAAARFGLSLVRAMQGEKGVVECAYVEGDGHYAR.

Aspartate 4 lines the NAD(+) pocket. Substrate is bound by residues arginine 51 and arginine 57. NAD(+)-binding positions include asparagine 64 and 87–89; that span reads ITN. Substrate is bound by residues asparagine 89 and arginine 123. Catalysis depends on histidine 147, which acts as the Proton acceptor. Methionine 197 is an NAD(+) binding site.

This sequence belongs to the LDH/MDH superfamily. MDH type 1 family. As to quaternary structure, homodimer.

The catalysed reaction is (S)-malate + NAD(+) = oxaloacetate + NADH + H(+). In terms of biological role, catalyzes the reversible oxidation of malate to oxaloacetate. In Klebsiella variicola, this protein is Malate dehydrogenase (mdh).